The primary structure comprises 202 residues: NADH-quinone oxidoreductase subunit C (202 aa).

Belongs to the complex I 30 kDa subunit family. In terms of assembly, NDH-1 is composed of 14 different subunits. Subunits NuoB, C, D, E, F, and G constitute the peripheral sector of the complex.

It is found in the cell inner membrane. It carries out the reaction a quinone + NADH + 5 H(+)(in) = a quinol + NAD(+) + 4 H(+)(out). NDH-1 shuttles electrons from NADH, via FMN and iron-sulfur (Fe-S) centers, to quinones in the respiratory chain. The immediate electron acceptor for the enzyme in this species is believed to be ubiquinone. Couples the redox reaction to proton translocation (for every two electrons transferred, four hydrogen ions are translocated across the cytoplasmic membrane), and thus conserves the redox energy in a proton gradient. The chain is NADH-quinone oxidoreductase subunit C from Bartonella henselae (strain ATCC 49882 / DSM 28221 / CCUG 30454 / Houston 1) (Rochalimaea henselae).